A 59-amino-acid chain; its full sequence is Light-harvesting protein B-800-850 alpha chain A (59 aa).

At 1-11 (MNQARIWTVVK) the chain is on the cytoplasmic side. A helical membrane pass occupies residues 12–35 (PTVGLPLLLGSVTVIAILVHFAVL). His31 serves as a coordination point for a bacteriochlorophyll. Residues 36–59 (SHTTWFSKYWNGKAAAIESSVNVG) lie on the Periplasmic side of the membrane.

This sequence belongs to the antenna complex alpha subunit family. As to quaternary structure, the core complex is formed by different alpha and beta chains, binding bacteriochlorophyll molecules, and arranged most probably in tetrameric structures disposed around the reaction center. The non-pigmented gamma chains may constitute additional components.

It is found in the cell inner membrane. In terms of biological role, antenna complexes are light-harvesting systems, which transfer the excitation energy to the reaction centers. The sequence is that of Light-harvesting protein B-800-850 alpha chain A (pucAA) from Rhodopseudomonas palustris (strain ATCC BAA-98 / CGA009).